Reading from the N-terminus, the 365-residue chain is Virion host shutoff protein (365 aa).

The protein belongs to the herpesviridae VHS protein family.

It localises to the virion. In terms of biological role, minor structural protein that acts as an endoribonuclease during lytic infection. Degrades host mRNAs in the cytoplasm by cutting them at preferred sites, including some in regions of translation initiation. The sequence is that of Virion host shutoff protein (VHS) from Sus scrofa (Pig).